Consider the following 388-residue polypeptide: Phosphopentomutase (388 aa).

Aspartate 10, aspartate 282, histidine 287, aspartate 323, histidine 324, and histidine 335 together coordinate Mn(2+).

It belongs to the phosphopentomutase family. It depends on Mn(2+) as a cofactor.

The protein localises to the cytoplasm. The catalysed reaction is 2-deoxy-alpha-D-ribose 1-phosphate = 2-deoxy-D-ribose 5-phosphate. It catalyses the reaction alpha-D-ribose 1-phosphate = D-ribose 5-phosphate. It functions in the pathway carbohydrate degradation; 2-deoxy-D-ribose 1-phosphate degradation; D-glyceraldehyde 3-phosphate and acetaldehyde from 2-deoxy-alpha-D-ribose 1-phosphate: step 1/2. Isomerase that catalyzes the conversion of deoxy-ribose 1-phosphate (dRib-1-P) and ribose 1-phosphate (Rib-1-P) to deoxy-ribose 5-phosphate (dRib-5-P) and ribose 5-phosphate (Rib-5-P), respectively. This Carboxydothermus hydrogenoformans (strain ATCC BAA-161 / DSM 6008 / Z-2901) protein is Phosphopentomutase.